The chain runs to 151 residues: Probable cGMP 3',5'-cyclic phosphodiesterase subunit delta (151 aa).

Belongs to the PDE6D/unc-119 family. Interacts with Pde6.

It localises to the nucleus. Its subcellular location is the cytoplasm. This chain is Probable cGMP 3',5'-cyclic phosphodiesterase subunit delta, found in Drosophila virilis (Fruit fly).